Consider the following 582-residue polypeptide: Actin-histidine N-methyltransferase (582 aa).

S-adenosyl-L-methionine contacts are provided by residues arginine 75, 104–106 (EGF), arginine 254, 275–279 (DMCNH), and 325–327 (NGF). The SET domain occupies 94–314 (DGFELVEFPE…SGEQIYIFYG (221 aa)). The interval 550–582 (DKDLLPNGTKSENDSFLAEDNQQETGNAKDFCS) is disordered.

This sequence belongs to the class V-like SAM-binding methyltransferase superfamily. SETD3 actin-histidine methyltransferase family.

It localises to the cytoplasm. It catalyses the reaction L-histidyl-[protein] + S-adenosyl-L-methionine = N(tele)-methyl-L-histidyl-[protein] + S-adenosyl-L-homocysteine + H(+). Protein-histidine N-methyltransferase that specifically mediates 3-methylhistidine (tele-methylhistidine) methylation of actin at 'His-73'. Does not have protein-lysine N-methyltransferase activity and probably only catalyzes histidine methylation of actin. This is Actin-histidine N-methyltransferase from Xenopus tropicalis (Western clawed frog).